Reading from the N-terminus, the 177-residue chain is Dual-action ribosomal maturation protein DarP (177 aa).

Positions 1-12 (MKIVGDSEHFKQ) are enriched in basic and acidic residues. Positions 1 to 26 (MKIVGDSEHFKQPYDSNDEYVSKTED) are disordered.

Belongs to the DarP family.

It is found in the cytoplasm. Member of a network of 50S ribosomal subunit biogenesis factors which assembles along the 30S-50S interface, preventing incorrect 23S rRNA structures from forming. Promotes peptidyl transferase center (PTC) maturation. This is Dual-action ribosomal maturation protein DarP from Shewanella oneidensis (strain ATCC 700550 / JCM 31522 / CIP 106686 / LMG 19005 / NCIMB 14063 / MR-1).